Consider the following 300-residue polypeptide: Inosose dehydratase (300 aa).

Belongs to the IolE/MocC family. Requires glutathione as cofactor. Co(2+) serves as cofactor. Mn(2+) is required as a cofactor.

It carries out the reaction scyllo-inosose = 3D-3,5/4-trihydroxycyclohexane-1,2-dione + H2O. It functions in the pathway polyol metabolism; myo-inositol degradation into acetyl-CoA; acetyl-CoA from myo-inositol: step 2/7. Catalyzes the dehydration of inosose (2-keto-myo-inositol, 2KMI or 2,4,6/3,5-pentahydroxycyclohexanone) to 3D-(3,5/4)-trihydroxycyclohexane-1,2-dione (D-2,3-diketo-4-deoxy-epi-inositol). This is Inosose dehydratase from Lactiplantibacillus plantarum (strain ATCC BAA-793 / NCIMB 8826 / WCFS1) (Lactobacillus plantarum).